We begin with the raw amino-acid sequence, 272 residues long: Putative phosphoenolpyruvate synthase regulatory protein (272 aa).

An ADP-binding site is contributed by G152–T159.

This sequence belongs to the pyruvate, phosphate/water dikinase regulatory protein family. PSRP subfamily.

It catalyses the reaction [pyruvate, water dikinase] + ADP = [pyruvate, water dikinase]-phosphate + AMP + H(+). It carries out the reaction [pyruvate, water dikinase]-phosphate + phosphate + H(+) = [pyruvate, water dikinase] + diphosphate. Bifunctional serine/threonine kinase and phosphorylase involved in the regulation of the phosphoenolpyruvate synthase (PEPS) by catalyzing its phosphorylation/dephosphorylation. This is Putative phosphoenolpyruvate synthase regulatory protein from Ectopseudomonas mendocina (strain ymp) (Pseudomonas mendocina).